The sequence spans 420 residues: Glutamate dehydrogenase (420 aa).

Residue Lys-105 is part of the active site. 220–226 (GYGNAGY) provides a ligand contact to NAD(+).

The protein belongs to the Glu/Leu/Phe/Val dehydrogenases family. In terms of assembly, homohexamer.

Its subcellular location is the cytoplasm. The enzyme catalyses L-glutamate + NAD(+) + H2O = 2-oxoglutarate + NH4(+) + NADH + H(+). It carries out the reaction L-glutamate + NADP(+) + H2O = 2-oxoglutarate + NH4(+) + NADPH + H(+). In Pyrococcus endeavori, this protein is Glutamate dehydrogenase (gdhA).